The following is a 165-amino-acid chain: Protein SprT (165 aa).

Residues E20–V163 enclose the SprT-like domain. Residue H78 participates in Zn(2+) binding. The active site involves E79. Position 82 (H82) interacts with Zn(2+).

Belongs to the SprT family. It depends on Zn(2+) as a cofactor.

Its subcellular location is the cytoplasm. The protein is Protein SprT of Shigella sonnei (strain Ss046).